Here is a 131-residue protein sequence, read N- to C-terminus: ATP synthase lipid-binding protein, mitochondrial (131 aa).

A mitochondrion-targeting transit peptide spans 1–56 (MLSAARLIAPAARSAIFSNAAVVRPLAAVSTQTQLVPAAPAQLSAVRSFQTTSVTK). Residues 72–92 (VGVAGSGAGIGTVFGSLIIGY) traverse the membrane as a helical segment. At lysine 99 the chain carries N6,N6,N6-trimethyllysine. The chain crosses the membrane as a helical span at residues 107–127 (ILGFALSEAMGLFCLMMAFLL).

The protein belongs to the ATPase C chain family. As to quaternary structure, F-type ATPases have 2 components, CF(1) - the catalytic core - and CF(0) - the membrane proton channel. CF(1) has five subunits: alpha(3), beta(3), gamma(1), delta(1), epsilon(1). CF(0) has three main subunits: a, b and c. Post-translationally, trimethylated by ATPSCKMT at Lys-99. Methylation may be required for proper incorporation of the C subunit into the ATP synthase complex and mitochondrial respiration.

The protein localises to the mitochondrion membrane. In terms of biological role, mitochondrial membrane ATP synthase (F(1)F(0) ATP synthase or Complex V) produces ATP from ADP in the presence of a proton gradient across the membrane which is generated by electron transport complexes of the respiratory chain. F-type ATPases consist of two structural domains, F(1) - containing the extramembraneous catalytic core and F(0) - containing the membrane proton channel, linked together by a central stalk and a peripheral stalk. During catalysis, ATP synthesis in the catalytic domain of F(1) is coupled via a rotary mechanism of the central stalk subunits to proton translocation. Part of the complex F(0) domain. A homomeric c-ring of probably 10 subunits is part of the complex rotary element. This Manduca sexta (Tobacco hawkmoth) protein is ATP synthase lipid-binding protein, mitochondrial.